We begin with the raw amino-acid sequence, 473 residues long: Phosphatidylserine synthase 1 (473 aa).

Over 1–35 (MAACVGSRTLSKDDVNYRLHFRMINEQQVEDITLE) the chain is Cytoplasmic. A helical transmembrane segment spans residues 36-56 (FFYRPHTITLLSFTILSLMAF). Over 57–72 (AFTRDDSVPEENIWRG) the chain is Lumenal. A helical transmembrane segment spans residues 73 to 93 (ILSVIFFFLIISVLAFPNGPF). Residues 94–102 (TRPHPAIWR) are Cytoplasmic-facing. The helical transmembrane segment at 103–123 (MVFGLSVLYFLFLVFVLFLNF) threads the bilayer. At 124–186 (EQVKAVMYWL…AMKALLIRSY (63 aa)) the chain is on the lumenal side. The chain crosses the membrane as a helical span at residues 187–207 (GLCWTISITWELTELFFMHLL). Residues 208-216 (PNFAECWWD) lie on the Cytoplasmic side of the membrane. Residues 217 to 237 (QVILDILLCNGGGIWLGMVVC) form a helical membrane-spanning segment. Over 238 to 286 (RFLEMRTYHWASFKDIHTTTGKIKRAVLQFTPASWTYVRWFDPKSSFQR) the chain is Lumenal. A helical transmembrane segment spans residues 287 to 307 (VAGIYLFMIIWQLTELNTFFL). Residues 308–319 (KHIFVFQASHPL) lie on the Cytoplasmic side of the membrane. A helical transmembrane segment spans residues 320–342 (SWGRILFIGIITAPTVRQYYAYL). Over 343 to 355 (TDTQCKRVGTQCW) the chain is Lumenal. Residues 356-376 (VFGVIAFLEAIVCIKFGQDLF) form a helical membrane-spanning segment. Topologically, residues 377-380 (SKTQ) are cytoplasmic. The helical transmembrane segment at 381–401 (ILYVVFWLLCVAFTTFLCLYG) threads the bilayer. At 402 to 473 (MVWYAEYYGH…SKVTNGIGKK (72 aa)) the chain is on the lumenal side. A disordered region spans residues 420 to 473 (EDSPYSPDASWLHSKFSKGADNSPPKHPVNSESHSSRRRNRHSRSKVTNGIGKK). Positions 455–464 (SRRRNRHSRS) are enriched in basic residues.

The protein belongs to the phosphatidyl serine synthase family.

The protein localises to the endoplasmic reticulum membrane. The catalysed reaction is a 1,2-diacyl-sn-glycero-3-phosphoethanolamine + L-serine = a 1,2-diacyl-sn-glycero-3-phospho-L-serine + ethanolamine. It catalyses the reaction a 1,2-diacyl-sn-glycero-3-phosphocholine + L-serine = a 1,2-diacyl-sn-glycero-3-phospho-L-serine + choline. It functions in the pathway phospholipid metabolism; phosphatidylserine biosynthesis. In terms of biological role, catalyzes a base-exchange reaction in which the polar head group of phosphatidylethanolamine (PE) or phosphatidylcholine (PC) is replaced by L-serine. Catalyzes mainly the conversion of phosphatidylcholine but also converts, in vitro and to a lesser extent, phosphatidylethanolamine. This chain is Phosphatidylserine synthase 1 (PTDSS1), found in Gallus gallus (Chicken).